Here is a 639-residue protein sequence, read N- to C-terminus: NADP-dependent malic enzyme, chloroplastic (639 aa).

A chloroplast-targeting transit peptide spans 1–49 (MLSARAAATAAAAAASPLWKRGEGGSSGSGSGCTSCREVRRRAAAVRVR). The segment at 15–34 (ASPLWKRGEGGSSGSGSGCT) is disordered. Catalysis depends on Tyr-187, which acts as the Proton donor. Arg-240 is an NAD(+) binding site. Lys-258 acts as the Proton acceptor in catalysis. Glu-330, Asp-331, and Asp-354 together coordinate a divalent metal cation. Asp-354 is an NAD(+) binding site. 383 to 399 (LFLGAGEAGTGIAELIA) provides a ligand contact to NADP(+). An NAD(+)-binding site is contributed by Asn-495.

Belongs to the malic enzymes family. As to quaternary structure, homotetramer. Mg(2+) serves as cofactor. The cofactor is Mn(2+).

The protein resides in the plastid. It localises to the chloroplast. The catalysed reaction is (S)-malate + NADP(+) = pyruvate + CO2 + NADPH. It carries out the reaction oxaloacetate + H(+) = pyruvate + CO2. Its pathway is photosynthesis; C4 acid pathway. Functionally, the chloroplastic ME isoform decarboxylates malate shuttled from neighboring mesophyll cells. The CO(2) released is then refixed by ribulose-bisphosphate carboxylase. This pathway eliminates the photorespiratory loss of CO(2) that occurs in most plants. The polypeptide is NADP-dependent malic enzyme, chloroplastic (ME6) (Oryza sativa subsp. japonica (Rice)).